The primary structure comprises 128 residues: 14.7 kDa protein (128 aa).

The segment at C65–H94 adopts a C4-type zinc-finger fold.

In terms of biological role, may act as a regulatory factor during viral transcription. The polypeptide is 14.7 kDa protein (Shallot virus X (ShVX)).